Reading from the N-terminus, the 281-residue chain is LC-AMP precursor 3 (281 aa).

A signal peptide spans 1-19 (MKYTIIPFLLLVALTCATA). The propeptide occupies 20-56 (RSIDGSEKEVQEIREETPSSNEDVPFSLSANEDEEAR). Position 74 is a leucine amide (leucine 74). The propeptide occupies 75 to 89 (GREESLSANEDEEAR). A Serine amide modification is found at serine 114. A propeptide spanning residues 115-129 (GREESFSANEDEEER) is cleaved from the precursor. At leucine 147 the chain carries Leucine amide. A propeptide spanning residues 148 to 162 (GREESISANEDEETR) is cleaved from the precursor. Leucine 180 carries the post-translational modification Leucine amide. A propeptide spanning residues 181–195 (GREESLSAIEDEEAR) is cleaved from the precursor. Leucine 213 is modified (leucine amide). Residues 214-228 (GREESLSANEDEEAR) constitute a propeptide that is removed on maturation. Leucine amide is present on leucine 246. Residues 247–261 (GREESLSANEDEEAR) constitute a propeptide that is removed on maturation. At leucine 279 the chain carries Leucine amide.

In terms of tissue distribution, expressed by the venom gland.

Its subcellular location is the secreted. Functionally, antimicrobial peptide that acts by influencing bacterial cell membrane permeability at low concentrations and by directly disrupting structure-function at high concentrations. Shows activity against Gram-negative bacteria (S.typhimurium CGMCC 1.1174 (MIC=2.5 uM), E.coli CCTCC AB 2018675 (MIC=5 uM), S.dysenteriae CGMCC 1.1869 (MIC=2.5 uM), P.aeruginosa CGMCC 1.596 (MIC 5-10 uM), K.pneumoniae (MIC=10 uM), A.baumannii (MIC=5-10 uM)), and Gram-positive bacteria (S.aureus CMCC 26003 or MRSA ATCC 43300 (MIC=5 uM), and E.faecium (MIC=2.5-5 uM)). Inhibits biofilm formation of E.coli and S.aureus in a dose-dependent manner and disrupts established biofilms. Demonstrates minimal bacterial resistance, excellent stability, negligible mammalian cell toxicity, low hemolytic activity, and appropriate selectivity for both normal and tumor cells. When combined with traditional antibiotics, exhibits additive or synergistic therapeutic effects. In vivo, in a neutropenic mouse thigh infection model, exhibits a therapeutic effect in inhibiting bacterial proliferation. This is LC-AMP precursor 3 from Lycosa coelestis (Wolf spider).